The sequence spans 381 residues: Cytochrome b (381 aa).

4 helical membrane-spanning segments follow: residues 33-53 (FGSLLGICLIIQILTGLFLAM), 77-98 (WLLRNLHANGASMFFMCLFLHV), 113-133 (WNIGVILLLTVMATAFVGYVL), and 178-198 (FFAFHFILPFIIVAFAAVHLL). Residues histidine 83 and histidine 97 each contribute to the heme b site. The heme b site is built by histidine 182 and histidine 196. Residue histidine 201 participates in a ubiquinone binding. The next 4 membrane-spanning stretches (helical) occupy residues 226–246 (IKDALGLIFLILSLLLLGLFS), 288–308 (LGGVLALLASILILLIIPLLH), 320–340 (IFQTLFWILTADLITLTWIGG), and 347–367 (FIIIGQLALMLYFLLILALMP).

Belongs to the cytochrome b family. The cytochrome bc1 complex contains 11 subunits: 3 respiratory subunits (MT-CYB, CYC1 and UQCRFS1), 2 core proteins (UQCRC1 and UQCRC2) and 6 low-molecular weight proteins (UQCRH/QCR6, UQCRB/QCR7, UQCRQ/QCR8, UQCR10/QCR9, UQCR11/QCR10 and a cleavage product of UQCRFS1). This cytochrome bc1 complex then forms a dimer. Heme b is required as a cofactor.

Its subcellular location is the mitochondrion inner membrane. Functionally, component of the ubiquinol-cytochrome c reductase complex (complex III or cytochrome b-c1 complex) that is part of the mitochondrial respiratory chain. The b-c1 complex mediates electron transfer from ubiquinol to cytochrome c. Contributes to the generation of a proton gradient across the mitochondrial membrane that is then used for ATP synthesis. The sequence is that of Cytochrome b (MT-CYB) from Dasykaluta rosamondae (Little red marsupial mouse).